The chain runs to 2922 residues: Small ribosomal subunit protein uS4c (2922 aa).

The S4 RNA-binding domain occupies 111–174; the sequence is MRLDNIVFRL…ISMELVSRFL (64 aa).

The protein belongs to the universal ribosomal protein uS4 family. As to quaternary structure, part of the 30S ribosomal subunit. Contacts protein S5. The interaction surface between S4 and S5 is involved in control of translational fidelity.

It is found in the plastid. Its subcellular location is the chloroplast. Functionally, one of the primary rRNA binding proteins, it binds directly to 16S rRNA where it nucleates assembly of the body of the 30S subunit. In terms of biological role, with S5 and S12 plays an important role in translational accuracy. In Stigeoclonium helveticum (Green alga), this protein is Small ribosomal subunit protein uS4c (rps4).